Consider the following 432-residue polypeptide: MVISKVASKCSPKNVTQSMVLVPSRNIASRKGFVKPIDPKEIIHPFYRPSQIEEFTLCSTERNPSLMDGKPVFPISLPLLSTSVLPQLLYKKIIFPSVRNIVPWLKKFNYIRIKNYSDEYYTIDFKPLEMPTVESKLTITNFPELKILVDLLENTNGGRTDIHNFELCLNNILQKRMSTRLFVEDIYIYLIQNYVTTIPKLILVTKSIKNHLNNGIDHLSILEKLVNEILYLVHSKKFTMDLVLMNTFNGLLKEADNKFNTHSSKFGFSETTKESLLMLYIQAEDIHSSKELLGNLISKKSYPKDEIILAYLDLINKAVYKSNPENAILQRLSYTSNFFNIINHTTNPEILRFFIHNSRHFKEIQCVLDMILKKKNRKDIVLPLCIDLIEKTVSVSDSAVSTSLNLTRLSDYFETMLGMNVRIEAKEVFMKK.

Residues 1–34 constitute a mitochondrion transit peptide; sequence MVISKVASKCSPKNVTQSMVLVPSRNIASRKGFV.

Belongs to the AEP1 family.

The protein resides in the mitochondrion. Functionally, required for translation of the mitochondrial OLI1 transcript encoding subunit 9 of mitochondrial ATP synthase. The polypeptide is ATPase expression protein 1, mitochondrial (AEP1) (Vanderwaltozyma polyspora (strain ATCC 22028 / DSM 70294 / BCRC 21397 / CBS 2163 / NBRC 10782 / NRRL Y-8283 / UCD 57-17) (Kluyveromyces polysporus)).